Consider the following 187-residue polypeptide: NADH-quinone oxidoreductase subunit B (187 aa).

[4Fe-4S] cluster-binding residues include Cys66, Cys67, Cys131, and Cys161.

The protein belongs to the complex I 20 kDa subunit family. NDH-1 is composed of 14 different subunits. Subunits NuoB, C, D, E, F, and G constitute the peripheral sector of the complex. [4Fe-4S] cluster serves as cofactor.

The protein localises to the cell inner membrane. It catalyses the reaction a quinone + NADH + 5 H(+)(in) = a quinol + NAD(+) + 4 H(+)(out). Its function is as follows. NDH-1 shuttles electrons from NADH, via FMN and iron-sulfur (Fe-S) centers, to quinones in the respiratory chain. The immediate electron acceptor for the enzyme in this species is believed to be ubiquinone. Couples the redox reaction to proton translocation (for every two electrons transferred, four hydrogen ions are translocated across the cytoplasmic membrane), and thus conserves the redox energy in a proton gradient. This chain is NADH-quinone oxidoreductase subunit B, found in Methylocella silvestris (strain DSM 15510 / CIP 108128 / LMG 27833 / NCIMB 13906 / BL2).